The chain runs to 410 residues: Solute carrier family 52, riboflavin transporter, member 3 (410 aa).

3 helical membrane passes run 3 to 23 (ILIY…INGL), 40 to 60 (LPSY…LVTL), and 73 to 93 (VVIY…AFFL). An N-linked (GlcNAc...) asparagine glycan is attached at Asn157. A run of 6 helical transmembrane segments spans residues 158-178 (FTTE…LAAF), 239-259 (FQLT…NGLL), 277-297 (LSAA…MFFP), 301-321 (LVFL…NMAM), 334-354 (ALGE…LSYV), and 369-389 (ALVW…VIMF).

It belongs to the riboflavin transporter family.

It localises to the cell membrane. It carries out the reaction riboflavin(in) = riboflavin(out). Functionally, plasma membrane transporter mediating the uptake by cells of the water soluble vitamin B2/riboflavin that plays a key role in biochemical oxidation-reduction reactions of the carbohydrate, lipid, and amino acid metabolism. The protein is Solute carrier family 52, riboflavin transporter, member 3 (slc52a3) of Osmerus mordax (Rainbow smelt).